The primary structure comprises 1299 residues: Nuclear factor related to kappa-B-binding protein (1299 aa).

One can recognise a DEUBAD domain in the interval 39–156 (PEDLLEDPEI…LKQILASRSD (118 aa)). Disordered stretches follow at residues 163–187 (RSGP…REWR) and 204–232 (GDTA…PAVP). A compositionally biased stretch (low complexity) spans 216 to 232 (SSWLPSSPARSPSPAVP). Serine 228 and serine 298 each carry phosphoserine. Lysine 327 is covalently cross-linked (Glycyl lysine isopeptide (Lys-Gly) (interchain with G-Cter in SUMO2)). Serine 351 carries the phosphoserine modification. The tract at residues 370–495 (LGINEISSSF…FCKQENEDSS (126 aa)) is winged-helix like domain. Residue lysine 469 forms a Glycyl lysine isopeptide (Lys-Gly) (interchain with G-Cter in SUMO2) linkage. Lysine 488 participates in a covalent cross-link: Glycyl lysine isopeptide (Lys-Gly) (interchain with G-Cter in SUMO1); alternate. Lysine 488 is covalently cross-linked (Glycyl lysine isopeptide (Lys-Gly) (interchain with G-Cter in SUMO2); alternate). Disordered regions lie at residues 669–760 (AAKA…SSSG), 882–902 (LPAT…TSAP), and 1017–1043 (VHAA…TVVK). 3 stretches are compositionally biased toward low complexity: residues 677–688 (QQKPKPPSKVKS), 695–715 (IKVL…DSSM), and 723–733 (VTPTTPALPAI). Polar residues predominate over residues 744–760 (NKSGPSTVSEPAKSSSG). 2 stretches are compositionally biased toward low complexity: residues 892 to 902 (PATSSPGTSAP) and 1019 to 1043 (AADS…TVVK). Position 1022 is a phosphoserine (serine 1022). Residue lysine 1237 is modified to N6-acetyllysine. Serine 1291 bears the Phosphoserine mark.

It belongs to the NFRKB family. As to quaternary structure, component of the chromatin remodeling INO80 complex; specifically part of a complex module associated with the N-terminus of INO80. Interacts with UCHL5; NFRKB competes with ADRM1 for interaction with UCHL5. In terms of tissue distribution, expressed in thymus, brain, testes, spleen and liver.

It localises to the nucleus. In terms of biological role, binds to the DNA consensus sequence 5'-GGGGAATCTCC-3'. Its function is as follows. Putative regulatory component of the chromatin remodeling INO80 complex which is involved in transcriptional regulation, DNA replication and probably DNA repair. Modulates the deubiquitinase activity of UCHL5 in the INO80 complex. This chain is Nuclear factor related to kappa-B-binding protein (NFRKB), found in Homo sapiens (Human).